Consider the following 426-residue polypeptide: Gamma-glutamyl phosphate reductase (426 aa).

Belongs to the gamma-glutamyl phosphate reductase family.

It is found in the cytoplasm. The catalysed reaction is L-glutamate 5-semialdehyde + phosphate + NADP(+) = L-glutamyl 5-phosphate + NADPH + H(+). The protein operates within amino-acid biosynthesis; L-proline biosynthesis; L-glutamate 5-semialdehyde from L-glutamate: step 2/2. Functionally, catalyzes the NADPH-dependent reduction of L-glutamate 5-phosphate into L-glutamate 5-semialdehyde and phosphate. The product spontaneously undergoes cyclization to form 1-pyrroline-5-carboxylate. This Nitrobacter winogradskyi (strain ATCC 25391 / DSM 10237 / CIP 104748 / NCIMB 11846 / Nb-255) protein is Gamma-glutamyl phosphate reductase.